The following is a 1124-amino-acid chain: MSVEAYGPSSQTLTFLDTEEAELLGADTQGSEFEFTDFTLPSQTQTPPGGPGGAGGPGGAGAGGAAGQLDAQVGPEGILQNGAVDDSVAKTSQLLAELNFEEDEEDTYYTKDLPVHACSYCGIHDPACVVYCNTSKKWFCNGRGNTSGSHIVNHLVRAKCKEVTLHKDGPLGETVLECYNCGCRNVFLLGFIPAKADSVVVLLCRQPCASQSSLKDINWDSSQWQPLIQDRCFLSWLVKIPSEQEQLRARQITAQQINKLEELWKENPSATLEDLEKPGVDEEPQHVLLRYEDAYQYQNIFGPLVKLEADYDKKLKESQTQDNITVRWDLGLNKKRIAFFTLPKTDSGNEDLVIIWLRDMRLMQGDEICLRYKGDLAPLWKGIGHVIKVPDNYGDEIAIELRSSVGAPVEVTHNFQVDFVWKSTSFDRMQSALKTFAVDETSVSGYIYHKLLGHEVEDVVIKCQLPKRFTAQGLPDLNHSQVYAVKTVLQRPLSLIQGPPGTGKTVTSATIVYHLARQGNGPVLVCAPSNIAVDQLTEKIHQTGLKVVRLCAKSREAIDSPVSFLALHNQIRNMDSMPELQKLQQLKDETGELSSADEKRYRALKRTAERELLMNADVICCTCVGAGDPRLAKMQFRSILIDESTQATEPECMVPVVLGAKQLILVGDHCQLGPVVMCKKAAKAGLSQSLFERLVVLGIRPIRLQVQYRMHPALSAFPSNIFYEGSLQNGVTAADRVKKGFDFQWPQPDKPMFFYVTQGQEEIASSGTSYLNRTEAANVEKITTKLLKAGAKPDQIGIITPYEGQRSYLVQYMQFSGSLHTKLYQEVEIASVDAFQGREKDFIILSCVRANEHQGIGFLNDPRRLNVALTRARYGVIIVGNPKALSKQPLWNHLLSYYKEQKALVEGPLNNLRESLMQFSKPRKLVNTVNPGARFMTTAMYDAREAIIPGSVYDRSSQGRPSNMYFQTHDQISMISAGPSHVAAMNIPIPFNLVMPPMPPPGYFGQANGPAAGRGTPKTKTGRGGRQKNRFGLPGPSQTTLPNSQASQDVASQPFSQGALTQGYVSMSQPSQMSQPGLSQPELSQDSYLGDEFKSQIDVALSQDSTYQGERAYQHGGVTGLSQY.

The sufficient for interaction with RENT2 stretch occupies residues 1-410; the sequence is MSVEAYGPSS…LRSSVGAPVE (410 aa). Phosphoserine occurs at positions 10 and 31. The disordered stretch occupies residues 39–69; the sequence is TLPSQTQTPPGGPGGAGGPGGAGAGGAAGQL. A compositionally biased stretch (gly residues) spans 51–66; that stretch reads PGGAGGPGGAGAGGAA. In terms of domain architecture, Upf1 CH-rich spans 110–267; sequence TKDLPVHACS…NKLEELWKEN (158 aa). Positions 118, 121, 132, 135, 140, 150, 154, 160, 178, 181, 204, and 208 each coordinate Zn(2+). The segment at 118-150 is C3H; it reads CSYCGIHDPACVVYCNTSKKWFCNGRGNTSGSH. Positions 132–160 are CC/SHH/C; that stretch reads CNTSKKWFCNGRGNTSGSHIVNHLVRAKC. Residues 178-208 form a C4 region; sequence CYNCGCRNVFLLGFIPAKADSVVVLLCRQPC. ATP is bound by residues Gln481 and 501–505; that span reads GTGKT. Residue Ser560 is modified to Phosphoserine. 3 residues coordinate ATP: Gln671, Tyr708, and Glu839. At Ser951 the chain carries Phosphoserine. Disordered regions lie at residues 1004 to 1053 and 1066 to 1091; these read FGQA…VASQ and SMSQ…YLGD. Residue Arg1014 is modified to Omega-N-methylarginine. Residues 1020–1029 are compositionally biased toward basic residues; that stretch reads KTGRGGRQKN. A compositionally biased stretch (polar residues) spans 1036–1053; that stretch reads PSQTTLPNSQASQDVASQ. The span at 1066-1081 shows a compositional bias: low complexity; that stretch reads SMSQPSQMSQPGLSQP. Ser1084, Ser1102, Ser1105, and Ser1122 each carry phosphoserine. 2 consecutive short sequence motifs ([ST]-Q motif) follow at residues 1084–1085 and 1102–1103; these read SQ. The interval 1105–1124 is disordered; that stretch reads STYQGERAYQHGGVTGLSQY.

Belongs to the DNA2/NAM7 helicase family. As to quaternary structure, found in a post-splicing messenger ribonucleoprotein (mRNP) complex. Associates with the exon junction complex (EJC). Associates with the SGM1C complex; is phosphorylated by the complex kinase component SGM1. Part of a complex composed of SMG1, DHX34 and UPF1; within the complex DHX34 acts as a scaffolding protein to facilitate SMG1 phosphorylation of UPF1. Interacts with UPF2. Interacts with UPF3A and UPF3B. Interacts with EST1A. Interacts with SLBP. Interacts (when hyperphosphorylated) with PNRC2. Interacts with AGO1 and AGO2. Interacts with GSPT2. Interacts with isoform 1 and isoform 5 of ADAR/ADAR1. Interacts with SMG7. Interacts with ZC3H12A; this interaction occurs in a mRNA translationally active- and termination-dependent manner and is essential for ZC3H12A-mediated degradation of target mRNAs. Interacts with CPSF6. Interacts with MOV10; the interaction is direct and RNA-dependent. Interacts with SHFL; the interaction increases in the presence of RNA. Interacts with UPF2 and DDX4; interactions are mediated by TDRD6. Interacts with DHX34 and PABPC1/PABP1; the interactions are RNA-independent. Interacts with RBM46. Post-translationally, phosphorylated by SMG1; required for formation of mRNA surveillance complexes. In terms of tissue distribution, localizes in male germ cells.

It is found in the cytoplasm. The protein localises to the P-body. The protein resides in the nucleus. Its subcellular location is the perinuclear region. It carries out the reaction ATP + H2O = ADP + phosphate + H(+). In terms of biological role, RNA-dependent helicase required for nonsense-mediated decay (NMD) of aberrant mRNAs containing premature stop codons and modulates the expression level of normal mRNAs. Is recruited to mRNAs upon translation termination and undergoes a cycle of phosphorylation and dephosphorylation; its phosphorylation appears to be a key step in NMD. Recruited by release factors to stalled ribosomes together with the SMG1C protein kinase complex to form the transient SURF (SMG1-UPF1-eRF1-eRF3) complex. In EJC-dependent NMD, the SURF complex associates with the exon junction complex (EJC) (located 50-55 or more nucleotides downstream from the termination codon) through UPF2 and allows the formation of an UPF1-UPF2-UPF3 surveillance complex which is believed to activate NMD. Phosphorylated UPF1 is recognized by EST1B/SMG5, SMG6 and SMG7 which are thought to provide a link to the mRNA degradation machinery involving exonucleolytic and endonucleolytic pathways, and to serve as adapters to protein phosphatase 2A (PP2A), thereby triggering UPF1 dephosphorylation and allowing the recycling of NMD factors. UPF1 can also activate NMD without UPF2 or UPF3, and in the absence of the NMD-enhancing downstream EJC indicative for alternative NMD pathways. Plays a role in replication-dependent histone mRNA degradation at the end of phase S; the function is independent of UPF2. For the recognition of premature termination codons (PTC) and initiation of NMD a competitive interaction between UPF1 and PABPC1 with the ribosome-bound release factors is proposed. The ATPase activity of UPF1 is required for disassembly of mRNPs undergoing NMD. Together with UPF2 and dependent on TDRD6, mediates the degradation of mRNA harboring long 3'UTR by inducing the NMD machinery. Also capable of unwinding double-stranded DNA and translocating on single-stranded DNA. This is Regulator of nonsense transcripts 1 from Mus musculus (Mouse).